The following is an 88-amino-acid chain: Phosphocarrier protein HPr (88 aa).

The 88-residue stretch at 1-88 (MEQASFVVID…EVLKKEGLAE (88 aa)) folds into the HPr domain. His-15 functions as the Pros-phosphohistidine intermediate in the catalytic mechanism. Ser-46 carries the phosphoserine; by HPrK/P modification.

The protein belongs to the HPr family.

It is found in the cytoplasm. With respect to regulation, phosphorylation on Ser-46 inhibits the phosphoryl transfer from enzyme I to HPr. In terms of biological role, general (non sugar-specific) component of the phosphoenolpyruvate-dependent sugar phosphotransferase system (sugar PTS). This major carbohydrate active-transport system catalyzes the phosphorylation of incoming sugar substrates concomitantly with their translocation across the cell membrane. The phosphoryl group from phosphoenolpyruvate (PEP) is transferred to the phosphoryl carrier protein HPr by enzyme I. Phospho-HPr then transfers it to the PTS EIIA domain. Functionally, P-Ser-HPr interacts with the catabolite control protein A (CcpA), forming a complex that binds to DNA at the catabolite response elements cre, operator sites preceding a large number of catabolite-regulated genes. Thus, P-Ser-HPr is a corepressor in carbon catabolite repression (CCR), a mechanism that allows bacteria to coordinate and optimize the utilization of available carbon sources. P-Ser-HPr also plays a role in inducer exclusion, in which it probably interacts with several non-PTS permeases and inhibits their transport activity. The protein is Phosphocarrier protein HPr (ptsH) of Listeria monocytogenes serovar 1/2a (strain ATCC BAA-679 / EGD-e).